A 359-amino-acid chain; its full sequence is UPF0283 membrane protein Rleg2_1967 (359 aa).

Residues 1–43 (MSKPPSDPPRRPPAAFTYEDEATERHDNGRQAERRRKPESFSE) are disordered. Residues 23-40 (TERHDNGRQAERRRKPES) are compositionally biased toward basic and acidic residues. A run of 2 helical transmembrane segments spans residues 77–97 (FGKI…GLWT) and 111–131 (LGYL…ALVI).

Belongs to the UPF0283 family.

It is found in the cell inner membrane. This Rhizobium leguminosarum bv. trifolii (strain WSM2304) protein is UPF0283 membrane protein Rleg2_1967.